Consider the following 213-residue polypeptide: Thymidine kinase (213 aa).

ATP contacts are provided by residues 22-29 and 94-97; these read GSMFSGKT and DEAQ. Glutamate 95 acts as the Proton acceptor in catalysis. Zn(2+)-binding residues include cysteine 151, cysteine 154, cysteine 183, and cysteine 186. The interval 185–213 is disordered; the sequence is RCFQPPRPTSTSSLKAPAPAATAPRPELP. Residues 193-213 show a composition bias toward low complexity; that stretch reads TSTSSLKAPAPAATAPRPELP.

It belongs to the thymidine kinase family. In terms of assembly, homotetramer.

It localises to the cytoplasm. It carries out the reaction thymidine + ATP = dTMP + ADP + H(+). This is Thymidine kinase from Rhodothermus sp. (strain ITI 518).